The chain runs to 804 residues: Leucine--tRNA ligase (804 aa).

A 'HIGH' region motif is present at residues 40–51 (PYPSGQGLHVGH). The 'KMSKS' region signature appears at 576-580 (KMSKS). Residue K579 coordinates ATP.

It belongs to the class-I aminoacyl-tRNA synthetase family.

The protein localises to the cytoplasm. It carries out the reaction tRNA(Leu) + L-leucine + ATP = L-leucyl-tRNA(Leu) + AMP + diphosphate. This is Leucine--tRNA ligase from Enterococcus faecalis (strain ATCC 700802 / V583).